The chain runs to 149 residues: Transcriptional repressor NrdR (149 aa).

The segment at 3-34 is a zinc-finger region; that stretch reads CPFCSAVDTKVIDSRLVGEGSQVRRRRQCLVC. The ATP-cone domain maps to 49–139; sequence PRVIKSNEVR…VYRSFEDIRE (91 aa).

The protein belongs to the NrdR family. It depends on Zn(2+) as a cofactor.

Its function is as follows. Negatively regulates transcription of bacterial ribonucleotide reductase nrd genes and operons by binding to NrdR-boxes. This Pectobacterium atrosepticum (strain SCRI 1043 / ATCC BAA-672) (Erwinia carotovora subsp. atroseptica) protein is Transcriptional repressor NrdR.